The primary structure comprises 527 residues: Putative BTB/POZ domain and WD-repeat protein R783 (527 aa).

The BTB domain maps to 45–115 (TDVTIVLDDG…FYSQNTDTRN (71 aa)). WD repeat units lie at residues 215-266 (IHGD…VEAS), 272-310 (NVKTRFEHFCYLPSNNHLISTSSYNIYVWDLSTNKLIKT), 313-353 (KHKN…IVRC), 355-391 (ISPVDCICYSSSGRELVIVNKHYIKVFNVSDGTFLFK), and 436-476 (YCPS…DNKY).

The protein belongs to the mimivirus BTB/WD family.

In Acanthamoeba polyphaga (Amoeba), this protein is Putative BTB/POZ domain and WD-repeat protein R783.